The following is a 415-amino-acid chain: 2-oxoadipate dioxygenase/decarboxylase (415 aa).

The 2-oxoadipate site is built by histidine 66, arginine 70, and histidine 225. Histidine 66 contacts Fe(2+). 2 residues coordinate Fe(2+): histidine 225 and glutamate 296. Alanine 361 is a binding site for 2-oxoadipate.

The protein belongs to the 2-oxoadipate dioxygenase/decarboxylase family. It depends on Fe(2+) as a cofactor.

It carries out the reaction 2-oxoadipate + O2 = (R)-2-hydroxyglutarate + CO2. Its function is as follows. Catalyzes the decarboxylation and hydroxylation of 2-oxoadipate (2OA) to form D-2-hydroxyglutarate (D-2-HGA). The polypeptide is 2-oxoadipate dioxygenase/decarboxylase (Mycobacterium bovis (strain ATCC BAA-935 / AF2122/97)).